The primary structure comprises 218 residues: Tubulin polymerization-promoting protein (218 aa).

The disordered stretch occupies residues 1–45 (MADSKAKPTKAANKTPPKSPGDPAKAAKRLSLESEGANEGAAAAP). A mediates interaction with LIMK1 region spans residues 2 to 115 (ADSKAKPTKA…SCRTITFEQF (114 aa)). Thr15 is modified (phosphothreonine). 3 positions are modified to phosphoserine: Ser19, Ser31, and Ser34. The span at 33 to 45 (ESEGANEGAAAAP) shows a compositional bias: low complexity. Zn(2+) is bound by residues His60, His71, Cys79, and Cys82. Position 91 is a phosphothreonine (Thr91). At Ser106 the chain carries Phosphoserine. The O-linked (GlcNAc) serine glycan is linked to Ser151. Phosphoserine is present on residues Ser158 and Ser159. The interval 165 to 192 (LTDTSKFTGSHKERFDQSGKGKGKAGRV) is disordered. Residues 174–183 (SHKERFDQSG) show a composition bias toward basic and acidic residues.

It belongs to the TPPP family. As to quaternary structure, homodimer. Binds tubulin; binding is inhibited by GTP. Interacts with MAPK1. Interacts with GAPDH; the interaction is direct. Interacts with LIMK1 (via the PDZ domain); the interaction is direct. Interacts with LIMK2. Interacts with HDAC6; thereby inhibiting the tubulin deacetylase activity of HDAC6. Interacts with aggregated SNCA; may have a pro-aggregatory role in synucleinopathies. Interacts with DYNLL1. Interacts (via C-terminus) with S100A2, S100A6 and S100B; these interactions inhibit TPPP dimerization. Mg(2+) serves as cofactor. Post-translationally, phosphorylated by LIMK1 on serine residues; phosphorylation may alter the tubulin polymerization activity. Phosphorylation by LIMK2, but not LIMK1, regulates astral microtubule organization at early stage of mitosis. Phosphorylation by ROCK1 at Ser-31, Ser-106 and Ser-158 inhibits interaction with HDAC6, resulting in decreased acetylation of tubulin, increased cell motility and entry into S-phase. Phosphorylation by CDK1 inhibits the microtubule polymerizing activity. Degraded by the proteasome; zinc-binding inhibits degradation by the proteasome. As to expression, predominantly expressed in mature oligodendrocytes.

The protein localises to the golgi outpost. The protein resides in the cytoplasm. Its subcellular location is the cytoskeleton. It localises to the microtubule organizing center. It is found in the nucleus. The protein localises to the spindle. The catalysed reaction is GTP + H2O = GDP + phosphate + H(+). Its function is as follows. Regulator of microtubule dynamics that plays a key role in myelination by promoting elongation of the myelin sheath. Acts as a microtubule nucleation factor in oligodendrocytes: specifically localizes to the postsynaptic Golgi apparatus region, also named Golgi outpost, and promotes microtubule nucleation, an important step for elongation of the myelin sheath. Required for both uniform polarized growth of distal microtubules as well as directing the branching of proximal processes. Shows magnesium-dependent GTPase activity; the role of the GTPase activity is unclear. In addition to microtubule nucleation activity, also involved in microtubule bundling and stabilization of existing microtubules, thereby maintaining the integrity of the microtubule network. Regulates microtubule dynamics by promoting tubulin acetylation: acts by inhibiting the tubulin deacetylase activity of HDAC6. Also regulates cell migration: phosphorylation by ROCK1 inhibits interaction with HDAC6, resulting in decreased acetylation of tubulin and increased cell motility. Plays a role in cell proliferation by regulating the G1/S-phase transition. Involved in astral microtubule organization and mitotic spindle orientation during early stage of mitosis; this process is regulated by phosphorylation by LIMK2. The chain is Tubulin polymerization-promoting protein from Rattus norvegicus (Rat).